The chain runs to 353 residues: MFIKGRAAKTPRGEPRRSSRGGRKLAVVAPPPVLGSTSRPHFRRESIARRRCRKSGRRLAASRKMAATAATVNGSTTVSSSGPAATSVGILQAAAGMYEQLKDEWNRKNPNLSKCGEELGRLKLVLLELNFLPTTGTKLTKQQLILARDILEIGAQWSILCKDIPSFERYMAQLKCYYFDYKEQLPESAYMHQLLGLNLLFLLSQNRVAEFHTELERLPAKDIQTNVYIKHPVSLEQYLMEGSYNKVFLAKGNIPAESYTFFIDILLDTIRDEIAGCIEKAYEKILFAEATRILFFSTPKKMTDYAKKRGWVLGPNNYYSFASQQQKPEDSTIPSTELAKQVIEYARQLEMIV.

The tract at residues 1-25 (MFIKGRAAKTPRGEPRRSSRGGRKL) is disordered. The PCI domain occupies 165–334 (PSFERYMAQL…QQKPEDSTIP (170 aa)). Residue Lys-300 forms a Glycyl lysine isopeptide (Lys-Gly) (interchain with G-Cter in SUMO2) linkage.

It belongs to the proteasome subunit S14 family. As to quaternary structure, component of the 19S proteasome regulatory particle complex. The 26S proteasome consists of a 20S core particle (CP) and two 19S regulatory subunits (RP). The regulatory particle is made of a lid composed of 9 subunits including PSMD8, a base containing 6 ATPases and few additional components. Interacts with DDI2. Interacts with TASOR. As to expression, expressed in the Sertoli cells of the testis.

Functionally, component of the 26S proteasome, a multiprotein complex involved in the ATP-dependent degradation of ubiquitinated proteins. This complex plays a key role in the maintenance of protein homeostasis by removing misfolded or damaged proteins, which could impair cellular functions, and by removing proteins whose functions are no longer required. Therefore, the proteasome participates in numerous cellular processes, including cell cycle progression, apoptosis, or DNA damage repair. The chain is 26S proteasome non-ATPase regulatory subunit 8 (Psmd8) from Mus musculus (Mouse).